Consider the following 150-residue polypeptide: Large ribosomal subunit protein bL9 (150 aa).

It belongs to the bacterial ribosomal protein bL9 family.

In terms of biological role, binds to the 23S rRNA. This Latilactobacillus sakei subsp. sakei (strain 23K) (Lactobacillus sakei subsp. sakei) protein is Large ribosomal subunit protein bL9.